The chain runs to 223 residues: Phosphoribosylformylglycinamidine synthase subunit PurQ (223 aa).

In terms of domain architecture, Glutamine amidotransferase type-1 spans 4-223; the sequence is KIGVITFPGT…FLSAIGTIAA (220 aa). The active-site Nucleophile is the cysteine 87. Catalysis depends on residues histidine 195 and glutamate 197.

Part of the FGAM synthase complex composed of 1 PurL, 1 PurQ and 2 PurS subunits.

It is found in the cytoplasm. The catalysed reaction is N(2)-formyl-N(1)-(5-phospho-beta-D-ribosyl)glycinamide + L-glutamine + ATP + H2O = 2-formamido-N(1)-(5-O-phospho-beta-D-ribosyl)acetamidine + L-glutamate + ADP + phosphate + H(+). The enzyme catalyses L-glutamine + H2O = L-glutamate + NH4(+). It participates in purine metabolism; IMP biosynthesis via de novo pathway; 5-amino-1-(5-phospho-D-ribosyl)imidazole from N(2)-formyl-N(1)-(5-phospho-D-ribosyl)glycinamide: step 1/2. Part of the phosphoribosylformylglycinamidine synthase complex involved in the purines biosynthetic pathway. Catalyzes the ATP-dependent conversion of formylglycinamide ribonucleotide (FGAR) and glutamine to yield formylglycinamidine ribonucleotide (FGAM) and glutamate. The FGAM synthase complex is composed of three subunits. PurQ produces an ammonia molecule by converting glutamine to glutamate. PurL transfers the ammonia molecule to FGAR to form FGAM in an ATP-dependent manner. PurS interacts with PurQ and PurL and is thought to assist in the transfer of the ammonia molecule from PurQ to PurL. The polypeptide is Phosphoribosylformylglycinamidine synthase subunit PurQ (Corynebacterium efficiens (strain DSM 44549 / YS-314 / AJ 12310 / JCM 11189 / NBRC 100395)).